We begin with the raw amino-acid sequence, 180 residues long: Shikimate kinase (180 aa).

19–24 (GAGKTT) is a binding site for ATP. Thr23 contacts Mg(2+). Positions 41, 65, and 87 each coordinate substrate. Arg125 is a binding site for ATP. Substrate is bound at residue Arg144.

Belongs to the shikimate kinase family. As to quaternary structure, monomer. It depends on Mg(2+) as a cofactor.

The protein resides in the cytoplasm. The enzyme catalyses shikimate + ATP = 3-phosphoshikimate + ADP + H(+). The protein operates within metabolic intermediate biosynthesis; chorismate biosynthesis; chorismate from D-erythrose 4-phosphate and phosphoenolpyruvate: step 5/7. Functionally, catalyzes the specific phosphorylation of the 3-hydroxyl group of shikimic acid using ATP as a cosubstrate. The chain is Shikimate kinase from Acinetobacter baumannii (strain SDF).